A 304-amino-acid polypeptide reads, in one-letter code: Probable cobalamin biosynthesis protein CobD (304 aa).

The next 5 helical transmembrane spans lie at 2-22, 50-70, 73-93, 147-167, and 284-304; these read IVVLIGALSIDIIFGEPKEYI, ILFSIAVIVLTAIPYFLAVYL, FILVVYVVVSMVILKTTFSIT, VDGYITPLFFFVFFGLPGAFI, and AAYSYIVIFVLPLLVIMAVFL.

It belongs to the CobD/CbiB family.

It is found in the cell membrane. It functions in the pathway cofactor biosynthesis; adenosylcobalamin biosynthesis. Functionally, converts cobyric acid to cobinamide by the addition of aminopropanol on the F carboxylic group. The polypeptide is Probable cobalamin biosynthesis protein CobD (Thermoplasma volcanium (strain ATCC 51530 / DSM 4299 / JCM 9571 / NBRC 15438 / GSS1)).